We begin with the raw amino-acid sequence, 87 residues long: U3-theraphotoxin-Hhn1a 15 (87 aa).

A signal peptide spans 1–24; the sequence is MVNMKASMFLTFAGLVLLLVVCYA. Positions 25-52 are excised as a propeptide; sequence SESEEKEFPKEMLSSIFAVDNDFKQEER. Intrachain disulfides connect C54–C67, C61–C72, and C66–C79.

This sequence belongs to the neurotoxin 10 (Hwtx-1) family. 51 (Hntx-8) subfamily. Hntx-8 sub-subfamily. In terms of tissue distribution, expressed by the venom gland.

It localises to the secreted. In terms of biological role, ion channel inhibitor. The protein is U3-theraphotoxin-Hhn1a 15 of Cyriopagopus hainanus (Chinese bird spider).